Reading from the N-terminus, the 221-residue chain is Serine/arginine-rich splicing factor 2 (221 aa).

S2 carries the post-translational modification N-acetylserine. Position 2 is a phosphoserine (S2). Residues 14-92 form the RRM domain; that stretch reads TSLKVDNLTY…RELRVQMARY (79 aa). 2 positions are modified to phosphothreonine: T22 and T25. Position 26 is a phosphoserine (S26). At K52 the chain carries N6-acetyllysine. A disordered region spans residues 92–221; that stretch reads YGRPPDSHHS…SPEEEGAVSS (130 aa). Composition is skewed to basic residues over residues 117–171 and 179–189; these read RRSR…RSKS and SRSRSRSRSRS. 7 positions are modified to phosphoserine: S189, S191, S204, S206, S208, S212, and S220.

The protein belongs to the splicing factor SR family. As to quaternary structure, interacts with CCNL1 and CCNL2. Interacts with SCAF11. Interacts with ZRSR2/U2AF1-RS2. Interacts with CCDC55 (via C-terminus). In vitro, self-associates and binds SRSF1/SFRS1 (ASF/SF2), SNRNP70 and U2AF1 but not U2AF2. Binds SREK1/SFRS12. Interacts with BRDT. In terms of processing, extensively phosphorylated on serine residues in the RS domain. Phosphorylated by SRPK2 and this causes its redistribution from the nuclear speckle to nucleoplasm and controls cell fate decision in response to cisplatin treatment. KAT5/TIP60 inhibits its phosphorylation by preventing SRPK2 nuclear translocation. Acetylation on Lys-52 by KAT5/TIP60 promotes its proteasomal degradation. This effect is counterbalanced by HDAC6, which positively controls SRSF2 protein level by deacetylating it and preventing its proteasomal degradation. Expressed in all the tissues examined; liver, kidney, spleen, heart, lung and brain.

The protein resides in the nucleus. The protein localises to the nucleoplasm. It localises to the nucleus speckle. Functionally, necessary for the splicing of pre-mRNA. It is required for formation of the earliest ATP-dependent splicing complex and interacts with spliceosomal components bound to both the 5'- and 3'-splice sites during spliceosome assembly. It also is required for ATP-dependent interactions of both U1 and U2 snRNPs with pre-mRNA. Can bind to the myelin basic protein (MBP) gene MB3 regulatory region and increase transcription of the mbp promoter in cells derived from the CNS. The phosphorylated form (by SRPK2) is required for cellular apoptosis in response to cisplatin treatment. This chain is Serine/arginine-rich splicing factor 2 (Srsf2), found in Mus musculus (Mouse).